Here is a 664-residue protein sequence, read N- to C-terminus: MSELLLELFSEEIPAFMQKNAEEGYLNIFTKIFEENEIFAKVQVFAGPRRITLHATHLPKITLPKEEEIKGPSIEAPETAINGFCKAHNVSKLELPTKLISNQLYYFFVKKTEEREIKEILPEIIIEAINKYSWAKSMFWGDYKIKWIRPLRNILCIFNGEILPMQFGHLTANNITYGHRLTDNKKLEVTDFEDYRNKLLENHVILERAKREAIIKTGLLELANSHELIIKEDNRLVEEVVGLSEFPIVLLGKIPQKFLELPKEVLISSMRTHQKYFCLFDKTGNFTPYFLFVSNGRFTNAELVIQGNEKVLSARLSDALYFCKQDIAKTLESRLGQLEAVTFHAKLGNLREKIERITDICNYIAPNNKDLITAARLCKSDLVSEMVWEFPDLQGIMGYYYAKHEGLNAEIAAAIKDHYKPQGLSDNVPSGNAALLALADKLDSLVGLMIAGETPTGSGDPYALRRQALGIIRIILENKLELNFNDLINFSINLYKDSSDENKNLIISFFEERAKFYFKNDYDIALINAVLDLNLIDTNFKLDELKEFLIEDAGKQLLNAYKRASNIIGDQKITGLVDASLFSTQPEKELFEVIQKISPEIIDSIADKDYKKALNLLSSLLTPITSFFDNILVNDSDPKIAQNRLSLLQNICELFDKVAKFNRL.

This sequence belongs to the class-II aminoacyl-tRNA synthetase family. As to quaternary structure, tetramer of two alpha and two beta subunits.

The protein resides in the cytoplasm. The enzyme catalyses tRNA(Gly) + glycine + ATP = glycyl-tRNA(Gly) + AMP + diphosphate. The chain is Glycine--tRNA ligase beta subunit from Rickettsia peacockii (strain Rustic).